We begin with the raw amino-acid sequence, 140 residues long: Putative nickel-responsive regulator (140 aa).

Residues His76, His87, His89, and Cys95 each contribute to the Ni(2+) site.

Belongs to the transcriptional regulatory CopG/NikR family. The cofactor is Ni(2+).

Functionally, transcriptional regulator. The sequence is that of Putative nickel-responsive regulator from Rhodopseudomonas palustris (strain BisB5).